Reading from the N-terminus, the 451-residue chain is Target of rapamycin complex 1 subunit tco89 (451 aa).

Positions 1–35 (MERPSLSRRTSSSTVSTDGEGVYSRSTKERKRNFI) are disordered. The segment covering 7 to 17 (SRRTSSSTVST) has biased composition (low complexity). A Phosphoserine modification is found at S70. Disordered stretches follow at residues 122 to 164 (WDDA…PVTR), 176 to 264 (INSN…GNSL), and 362 to 437 (NQNF…DTDY). Residues 129–162 (NDSTAGNLDSDSALPTPSVTTNEAADSSRASSPV) are compositionally biased toward polar residues. Residues 203 to 215 (DDSAADASTTKSS) show a composition bias toward low complexity. 3 stretches are compositionally biased toward polar residues: residues 228 to 242 (HSNN…NQPK), 362 to 376 (NQNF…TSAA), and 407 to 417 (QSASLNASMSA). A compositionally biased stretch (basic residues) spans 419–430 (SHARQRSIHVPK).

Belongs to the TORC subunit TCO89 family. As to quaternary structure, the target of rapamycin complex 1 (TORC1) is composed of at least mip1, pop3/wat1, tco89, toc1 and tor2. Post-translationally, either Thr-10, Ser-11, Ser-12, Ser-13 or Thr-14 and Ser-214 or Ser-215 and Ser-247 or Ser-249 are phosphorylated as well.

The protein localises to the cytoplasm. Its function is as follows. Component of TORC1, which regulates multiple cellular processes to control cell growth in response to environmental signals. Tor2 is essential for growth. Nutrient limitation and environmental stress signals cause inactivation of TORC1. Active TORC1 positively controls cell growth and ribosome biogenesis by regulating ribosomal protein gene expression. TORC1 negatively controls G1 cell-cycle arrest, sexual development and amino acid uptake. Represses mating, meiosis and sporulation efficiency by interfering with the functions of the transcription factor ste11 and the meiosis-promoting RNA-binding protein mei2. This chain is Target of rapamycin complex 1 subunit tco89, found in Schizosaccharomyces pombe (strain 972 / ATCC 24843) (Fission yeast).